The chain runs to 341 residues: L-threonine 3-dehydrogenase (341 aa).

Zn(2+) is bound at residue Cys38. Active-site charge relay system residues include Thr40 and His43. Positions 63, 64, 93, 96, 99, and 107 each coordinate Zn(2+). NAD(+) is bound by residues Ile175, Asp195, Arg200, 262–264, and 286–287; these read LGI and IY.

Belongs to the zinc-containing alcohol dehydrogenase family. In terms of assembly, homotetramer. Zn(2+) is required as a cofactor.

The protein localises to the cytoplasm. It catalyses the reaction L-threonine + NAD(+) = (2S)-2-amino-3-oxobutanoate + NADH + H(+). The protein operates within amino-acid degradation; L-threonine degradation via oxydo-reductase pathway; glycine from L-threonine: step 1/2. Its function is as follows. Catalyzes the NAD(+)-dependent oxidation of L-threonine to 2-amino-3-ketobutyrate. The sequence is that of L-threonine 3-dehydrogenase from Salmonella arizonae (strain ATCC BAA-731 / CDC346-86 / RSK2980).